The sequence spans 546 residues: DDB1- and CUL4-associated factor 11 (546 aa).

Residues 1–10 show a composition bias toward polar residues; it reads MGSRNSSSAG. The interval 1-40 is disordered; that stretch reads MGSRNSSSAGTGSGDPSEGLPRRGAGLRRSEEEEEEDEDV. 2 positions are modified to phosphoserine: S73 and S75. The segment at 79–100 is disordered; sequence HDSAWDGRLGDRYNPPVDATPD. Positions 80–89 are enriched in basic and acidic residues; the sequence is DSAWDGRLGD. WD repeat units follow at residues 170–210, 216–258, 263–302, 305–345, 353–392, 435–480, and 481–520; these read TYSQ…RKFK, DVGW…TALD, ERRF…RTLQ, SHED…EDDP, GHQD…SREG, GVLH…KKLT, and THKA…YFQD. Positions 521–546 are disordered; it reads DMPESEEHPSTPAPMSHPSTAFSSPQ. Polar residues predominate over residues 537-546; the sequence is HPSTAFSSPQ.

Interacts with DDB1 and CUL4A.

It functions in the pathway protein modification; protein ubiquitination. May function as a substrate receptor for CUL4-DDB1 E3 ubiquitin-protein ligase complex. This Bos taurus (Bovine) protein is DDB1- and CUL4-associated factor 11 (DCAF11).